A 223-amino-acid chain; its full sequence is Killer cell lectin-like receptor subfamily B member 1B allele B (223 aa).

At methionine 1 to cysteine 45 the chain is on the cytoplasmic side. The ITIM motif signature appears at valine 5–leucine 10. Residues cysteine 31–proline 34 carry the LCK-binding motif motif. A helical; Signal-anchor for type II membrane protein transmembrane segment spans residues alanine 46–leucine 66. Residues glutamine 67–serine 223 are Extracellular-facing. The C-type lectin domain occupies histidine 101–glutamine 211. Intrachain disulfides connect cysteine 122–cysteine 210 and cysteine 189–cysteine 202.

In terms of assembly, homodimer; disulfide-linked. Interacts with tyrosine kinase LCK. Binds PTPN6/SHP-1 in a phosphorylation-dependent manner. As to expression, expressed in a subset of natural killer cells.

The protein resides in the membrane. In terms of biological role, receptor for CLEC2D/OCIL. Ligand-binding contributes to inhibition of cytotoxic natural killer (NK) cells. May mediate MHC class I-independent 'missing-self' recognition of allografts, tumor cells and virus-infected cells. In Rattus norvegicus (Rat), this protein is Killer cell lectin-like receptor subfamily B member 1B allele B.